The sequence spans 128 residues: Small ribosomal subunit protein uS13 (128 aa).

Residues 95–118 (GLPVRGQRTHTNARTRKGPKKGLV) are compositionally biased toward basic residues. The disordered stretch occupies residues 95–128 (GLPVRGQRTHTNARTRKGPKKGLVRKAAAPAPMA).

It belongs to the universal ribosomal protein uS13 family. In terms of assembly, part of the 30S ribosomal subunit. Forms a loose heterodimer with protein S19. Forms two bridges to the 50S subunit in the 70S ribosome.

Functionally, located at the top of the head of the 30S subunit, it contacts several helices of the 16S rRNA. In the 70S ribosome it contacts the 23S rRNA (bridge B1a) and protein L5 of the 50S subunit (bridge B1b), connecting the 2 subunits; these bridges are implicated in subunit movement. Contacts the tRNAs in the A and P-sites. In Anaeromyxobacter dehalogenans (strain 2CP-1 / ATCC BAA-258), this protein is Small ribosomal subunit protein uS13.